Here is a 128-residue protein sequence, read N- to C-terminus: uncharacterized protein (128 aa).

This is an uncharacterized protein from Mycobacterium bovis (strain ATCC BAA-935 / AF2122/97).